A 477-amino-acid chain; its full sequence is Alanine--glyoxylate aminotransferase 2 homolog 2, mitochondrial (477 aa).

Residues 1–22 constitute a mitochondrion transit peptide; it reads MQRFAAKRSVQNISVSLWRRCI. Residues 165-166, Y192, and 292-295 each bind pyridoxal 5'-phosphate; these read GT and DEVQ. Residue K321 is modified to N6-(pyridoxal phosphate)lysine. T350 lines the pyridoxal 5'-phosphate pocket.

This sequence belongs to the class-III pyridoxal-phosphate-dependent aminotransferase family. In terms of assembly, homotetramer. Interacts with GRF3. It depends on pyridoxal 5'-phosphate as a cofactor.

The protein localises to the mitochondrion. The catalysed reaction is glyoxylate + L-alanine = glycine + pyruvate. In Arabidopsis thaliana (Mouse-ear cress), this protein is Alanine--glyoxylate aminotransferase 2 homolog 2, mitochondrial (AGT3).